The primary structure comprises 130 residues: Profilin-12 (130 aa).

The cysteines at positions 13 and 115 are disulfide-linked. The Involved in PIP2 interaction signature appears at 81 to 97 (AVIRGKKGSGGITVKKT). Threonine 111 is modified (phosphothreonine).

The protein belongs to the profilin family. Occurs in many kinds of cells as a complex with monomeric actin in a 1:1 ratio. Phosphorylated by MAP kinases.

It is found in the cytoplasm. The protein localises to the cytoskeleton. In terms of biological role, binds to actin and affects the structure of the cytoskeleton. At high concentrations, profilin prevents the polymerization of actin, whereas it enhances it at low concentrations. This chain is Profilin-12, found in Zea mays (Maize).